The primary structure comprises 225 residues: Ribose-5-phosphate isomerase A (225 aa).

Substrate contacts are provided by residues 32–35 (TGST), 85–88 (DGAD), and 98–101 (KGGG). E107 acts as the Proton acceptor in catalysis. A substrate-binding site is contributed by K125.

Belongs to the ribose 5-phosphate isomerase family. Homodimer.

The enzyme catalyses aldehydo-D-ribose 5-phosphate = D-ribulose 5-phosphate. Its pathway is carbohydrate degradation; pentose phosphate pathway; D-ribose 5-phosphate from D-ribulose 5-phosphate (non-oxidative stage): step 1/1. Catalyzes the reversible conversion of ribose-5-phosphate to ribulose 5-phosphate. The protein is Ribose-5-phosphate isomerase A of Hahella chejuensis (strain KCTC 2396).